Consider the following 425-residue polypeptide: ATP-dependent RNA helicase RhlB (425 aa).

The short motif at 9–37 (TRFADLALHPKIQQAISSAGFEYCTPIQA) is the Q motif element. In terms of domain architecture, Helicase ATP-binding spans 40-218 (LPVALSNRDV…YEHMNAPTKL (179 aa)). 53–60 (AQTGTGKT) provides a ligand contact to ATP. The DEAD box signature appears at 164-167 (DEAD). Residues 242-389 (KFPLLLTLIE…VTKYDGDALL (148 aa)) enclose the Helicase C-terminal domain. Residues 391–425 (DLRRPRPIQRRRRHNSGGGKGKPRGRRSGPPRNAS) are disordered. The segment covering 395–419 (PRPIQRRRRHNSGGGKGKPRGRRSG) has biased composition (basic residues).

It belongs to the DEAD box helicase family. RhlB subfamily. As to quaternary structure, component of the RNA degradosome, which is a multiprotein complex involved in RNA processing and mRNA degradation.

The protein resides in the cytoplasm. The enzyme catalyses ATP + H2O = ADP + phosphate + H(+). Functionally, DEAD-box RNA helicase involved in RNA degradation. Has RNA-dependent ATPase activity and unwinds double-stranded RNA. In Idiomarina loihiensis (strain ATCC BAA-735 / DSM 15497 / L2-TR), this protein is ATP-dependent RNA helicase RhlB.